We begin with the raw amino-acid sequence, 424 residues long: D-inositol 3-phosphate glycosyltransferase (424 aa).

Residue His-21 coordinates 1D-myo-inositol 3-phosphate. UDP-N-acetyl-alpha-D-glucosamine is bound by residues 27-28 (QP) and Gly-35. Residues 32-37 (DAGGMN), Lys-90, Tyr-123, Thr-147, and Arg-167 contribute to the 1D-myo-inositol 3-phosphate site. UDP-N-acetyl-alpha-D-glucosamine is bound by residues Arg-241, Lys-246, and Gln-299. Residues Phe-308, Gln-309, and Ala-311 each contribute to the Mg(2+) site. Positions 321 and 329 each coordinate UDP-N-acetyl-alpha-D-glucosamine. Mg(2+) is bound at residue Thr-335.

It belongs to the glycosyltransferase group 1 family. MshA subfamily. Homodimer.

It catalyses the reaction 1D-myo-inositol 3-phosphate + UDP-N-acetyl-alpha-D-glucosamine = 1D-myo-inositol 2-acetamido-2-deoxy-alpha-D-glucopyranoside 3-phosphate + UDP + H(+). Catalyzes the transfer of a N-acetyl-glucosamine moiety to 1D-myo-inositol 3-phosphate to produce 1D-myo-inositol 2-acetamido-2-deoxy-glucopyranoside 3-phosphate in the mycothiol biosynthesis pathway. The sequence is that of D-inositol 3-phosphate glycosyltransferase from Mycobacterium avium (strain 104).